Reading from the N-terminus, the 129-residue chain is Follitropin subunit beta (129 aa).

The signal sequence occupies residues 1–18 (MKSVQFCFLFCCWKAICC). Intrachain disulfides connect Cys-21–Cys-69, Cys-35–Cys-84, Cys-38–Cys-122, Cys-46–Cys-100, Cys-50–Cys-102, and Cys-105–Cys-112. 2 N-linked (GlcNAc...) asparagine glycosylation sites follow: Asn-25 and Asn-42.

The protein belongs to the glycoprotein hormones subunit beta family. Heterodimer. The active follitropin is a heterodimer composed of an alpha chain/CGA shared with other hormones and a unique beta chain/FSHB shown here.

Its subcellular location is the secreted. Its function is as follows. Together with the alpha chain CGA constitutes follitropin, the follicle-stimulating hormone, and provides its biological specificity to the hormone heterodimer. Binds FSHR, a G protein-coupled receptor, on target cells to activate downstream signaling pathways. Follitropin is involved in follicle development and spermatogenesis in reproductive organs. This chain is Follitropin subunit beta (FSHB), found in Oryctolagus cuniculus (Rabbit).